Here is a 507-residue protein sequence, read N- to C-terminus: DNA ligase B (507 aa).

The not required for adenylyltransferase activity, required for nick joining stretch occupies residues 1–172 (MLLHDVAITS…AAAAGLSGAA (172 aa)). Glu-209 provides a ligand contact to ATP. Lys-211 serves as the catalytic N6-AMP-lysine intermediate. Positions 216, 231, 260, 300, 372, and 378 each coordinate ATP.

Belongs to the ATP-dependent DNA ligase family. Monomer. Mg(2+) is required as a cofactor.

It carries out the reaction ATP + (deoxyribonucleotide)n-3'-hydroxyl + 5'-phospho-(deoxyribonucleotide)m = (deoxyribonucleotide)n+m + AMP + diphosphate.. Its function is as follows. DNA ligase that seals nicks in double-stranded DNA during DNA replication, DNA recombination and DNA repair. In Mycobacterium tuberculosis (strain ATCC 25618 / H37Rv), this protein is DNA ligase B (ligB).